The sequence spans 374 residues: Putative F-box protein At3g16590 (374 aa).

In terms of domain architecture, F-box spans 1 to 45 (MPTKLPLELEDEILLRVPPLSLTRFRTVCKRWNTLFNDQRFINNH).

This is Putative F-box protein At3g16590 from Arabidopsis thaliana (Mouse-ear cress).